Reading from the N-terminus, the 649-residue chain is MADDSGTENEGSGCTGWFMVEAIVQHPTGTQISDDEDEEVEDSGYDMVDFIDDSNITHNSLEAQALFNRQEADTHYATVQDLKRKYLGSPYVSPINTIAEAVESEISPRLDAIKLTRQPKKVKRRLFQTRELTDSGYGYSEVEAGTGTQVEKHGVPENGGDGQEKDTGRDIEGEEHTEAEAPTNSVREHAGTAGILELLKCKDLRAALLGKFKECFGLSFIDLIRPFKSDKTTCLDWVVAGFGIHHSISEAFQKLIEPLSLYAHIQWLTNAWGMVLLVLLRFKVNKSRSTVARTLATLLNIPENQMLIEPPKIQSGVAALYWFRTGISNASTVIGEAPEWITRQTVIEHGLADSQFKLTEMVQWAYDNDICEESEIAFEYAQRGDFDSNARAFLNSNMQAKYVKDCATMCRHYKHAEMRKMSIKQWIKHRGSKIEGTGNWKPIVQFLRHQNIEFIPFLTKFKLWLHGTPKKNCIAIVGPPDTGKSYFCMSLISFLGGTVISHVNSSSHFWLQPLVDAKVALLDDATQPCWIYMDTYMRNLLDGNPMSIDRKHKALTLIKCPPLLVTSNIDITKEDKYKYLHTRVTTFTFPNPFPFDRNGNAVYELSNTNWKCFFERLSSSLDIQDSEDEEDGSNSQAFRCVPGTVVRTL.

The Nuclear localization signal motif lies at 83–85; sequence KRK. Phosphoserine; by host occurs at positions 89, 93, and 107. A Nuclear export signal motif is present at residues 106-115; it reads ISPRLDAIKL. Positions 138–169 are disordered; the sequence is GYSEVEAGTGTQVEKHGVPENGGDGQEKDTGR. Residues 187-353 form a DNA-binding region region; it reads REHAGTAGIL…QTVIEHGLAD (167 aa). The region spanning 452–602 is the SF3 helicase domain; the sequence is IEFIPFLTKF…FPFDRNGNAV (151 aa). ATP is bound at residue 478–485; that stretch reads GPPDTGKS. Lys559 participates in a covalent cross-link: Glycyl lysine isopeptide (Lys-Gly) (interchain with G-Cter in SUMO).

The protein belongs to the papillomaviridae E1 protein family. Can form hexamers. Interacts with E2 protein; this interaction increases E1 DNA binding specificity. Interacts with host DNA polymerase subunit POLA2. Interacts with host single stranded DNA-binding protein RPA1. Interacts with host TOP1; this interaction stimulates the enzymatic activity of TOP1. Post-translationally, phosphorylated. In terms of processing, sumoylated.

The protein resides in the host nucleus. It carries out the reaction Couples ATP hydrolysis with the unwinding of duplex DNA by translocating in the 3'-5' direction.. The catalysed reaction is ATP + H2O = ADP + phosphate + H(+). ATP-dependent DNA 3'-5' helicase required for initiation of viral DNA replication. It forms a complex with the viral E2 protein. The E1-E2 complex binds to the replication origin which contains binding sites for both proteins. During the initial step, a dimer of E1 interacts with a dimer of protein E2 leading to a complex that binds the viral origin of replication with high specificity. Then, a second dimer of E1 displaces the E2 dimer in an ATP-dependent manner to form the E1 tetramer. Following this, two E1 monomers are added to each half of the site, which results in the formation of two E1 trimers on the viral ori. Subsequently, two hexamers will be created. The double hexamer acts as a bi-directional helicase machinery and unwinds the viral DNA and then recruits the host DNA polymerase to start replication. This chain is Replication protein E1, found in Homo sapiens (Human).